Here is a 446-residue protein sequence, read N- to C-terminus: Beta-glucosidase A (446 aa).

Glu-166 (proton donor) is an active-site residue. Residue Glu-351 is the Nucleophile of the active site.

It belongs to the glycosyl hydrolase 1 family.

The catalysed reaction is Hydrolysis of terminal, non-reducing beta-D-glucosyl residues with release of beta-D-glucose.. It functions in the pathway glycan metabolism; cellulose degradation. This chain is Beta-glucosidase A (bglA), found in Thermotoga maritima (strain ATCC 43589 / DSM 3109 / JCM 10099 / NBRC 100826 / MSB8).